The sequence spans 136 residues: NADPH-dependent 7-cyano-7-deazaguanine reductase (136 aa).

Catalysis depends on Cys50, which acts as the Thioimide intermediate. Asp57 serves as the catalytic Proton donor. Residues 72–74 and 91–92 contribute to the substrate site; these read YEL and HE.

It belongs to the GTP cyclohydrolase I family. QueF type 1 subfamily.

The protein localises to the cytoplasm. The enzyme catalyses 7-aminomethyl-7-carbaguanine + 2 NADP(+) = 7-cyano-7-deazaguanine + 2 NADPH + 3 H(+). The protein operates within tRNA modification; tRNA-queuosine biosynthesis. In terms of biological role, catalyzes the NADPH-dependent reduction of 7-cyano-7-deazaguanine (preQ0) to 7-aminomethyl-7-deazaguanine (preQ1). The polypeptide is NADPH-dependent 7-cyano-7-deazaguanine reductase (Prochlorococcus marinus (strain MIT 9215)).